Consider the following 293-residue polypeptide: 33 kDa chaperonin (293 aa).

2 disulfide bridges follow: Cys-236/Cys-238 and Cys-269/Cys-272.

It belongs to the HSP33 family. Under oxidizing conditions two disulfide bonds are formed involving the reactive cysteines. Under reducing conditions zinc is bound to the reactive cysteines and the protein is inactive.

Its subcellular location is the cytoplasm. Redox regulated molecular chaperone. Protects both thermally unfolding and oxidatively damaged proteins from irreversible aggregation. Plays an important role in the bacterial defense system toward oxidative stress. This is 33 kDa chaperonin from Lactobacillus delbrueckii subsp. bulgaricus (strain ATCC 11842 / DSM 20081 / BCRC 10696 / JCM 1002 / NBRC 13953 / NCIMB 11778 / NCTC 12712 / WDCM 00102 / Lb 14).